The following is a 682-amino-acid chain: T-box brain protein 1 (682 aa).

2 disordered regions span residues 43-83 (TDNL…RSKL) and 108-127 (SQSSQPQSAATAPSAMFPYP). Residues 58–68 (GMTNQSDTDNF) show a composition bias toward polar residues. Low complexity predominate over residues 108–122 (SQSSQPQSAATAPSA). Residues 213–393 (LWLKFHRHQT…HNPFAKGFRD (181 aa)) constitute a DNA-binding region (T-box). Thr-408 is modified (phosphothreonine). Residue Ser-410 is modified to Phosphoserine. 2 disordered regions span residues 447-483 (PGAGAGPGPGTDRSVPHTNGLLSPQQAEDPGAPSPQR) and 588-658 (GLAA…KSEV). The segment covering 462–472 (PHTNGLLSPQQ) has biased composition (polar residues). Ser-594 is modified (phosphoserine). A compositionally biased stretch (low complexity) spans 619 to 629 (SSIKSIDSSDS). Residue Ser-641 is modified to Phosphoserine.

As to quaternary structure, homodimer. Part of a complex containing CASK, TBR1 and TSPYL2; may modulate gene expression in response to neuronal synaptic activity. Interacts with FOXP2. Interacts with FOXP1. Interacts with BCL11A. As to expression, brain.

The protein resides in the nucleus. Its function is as follows. Transcriptional repressor involved in multiple aspects of cortical development, including neuronal migration, laminar and areal identity, and axonal projection. As transcriptional repressor of FEZF2, it blocks the formation of the corticospinal (CS) tract from layer 6 projection neurons, thereby restricting the origin of CS axons specifically to layer 5 neurons. The protein is T-box brain protein 1 (TBR1) of Homo sapiens (Human).